A 636-amino-acid polypeptide reads, in one-letter code: Biosynthetic arginine decarboxylase (636 aa).

Lys-101 is modified (N6-(pyridoxal phosphate)lysine). 286–296 (FDVGGGLAVDY) is a binding site for substrate.

This sequence belongs to the Orn/Lys/Arg decarboxylase class-II family. SpeA subfamily. Requires Mg(2+) as cofactor. Pyridoxal 5'-phosphate serves as cofactor.

It carries out the reaction L-arginine + H(+) = agmatine + CO2. It participates in amine and polyamine biosynthesis; agmatine biosynthesis; agmatine from L-arginine: step 1/1. Catalyzes the biosynthesis of agmatine from arginine. The protein is Biosynthetic arginine decarboxylase of Shewanella frigidimarina (strain NCIMB 400).